A 286-amino-acid polypeptide reads, in one-letter code: Pantothenate synthetase (286 aa).

31–38 lines the ATP pocket; that stretch reads MGALHDGH. Catalysis depends on histidine 38, which acts as the Proton donor. (R)-pantoate is bound at residue glutamine 62. Glutamine 62 lines the beta-alanine pocket. 148 to 151 contacts ATP; that stretch reads GKKD. Glutamine 154 contacts (R)-pantoate. ATP is bound by residues valine 177 and 185 to 188; that span reads KSSR.

Belongs to the pantothenate synthetase family. In terms of assembly, homodimer.

The protein localises to the cytoplasm. The enzyme catalyses (R)-pantoate + beta-alanine + ATP = (R)-pantothenate + AMP + diphosphate + H(+). It functions in the pathway cofactor biosynthesis; (R)-pantothenate biosynthesis; (R)-pantothenate from (R)-pantoate and beta-alanine: step 1/1. Functionally, catalyzes the condensation of pantoate with beta-alanine in an ATP-dependent reaction via a pantoyl-adenylate intermediate. The sequence is that of Pantothenate synthetase from Staphylococcus epidermidis (strain ATCC 35984 / DSM 28319 / BCRC 17069 / CCUG 31568 / BM 3577 / RP62A).